We begin with the raw amino-acid sequence, 259 residues long: tRNA (guanine-N(7)-)-methyltransferase (259 aa).

Basic and acidic residues predominate over residues 1-11; that stretch reads MSNTDNSDKNT. The disordered stretch occupies residues 1–29; it reads MSNTDNSDKNTKPTGYRPPQTDFNTEFGN. S-adenosyl-L-methionine-binding residues include E89, E114, D141, and D164. The active site involves D164. Residues K168, D200, and 238 to 241 each bind substrate; that span reads TKFE.

This sequence belongs to the class I-like SAM-binding methyltransferase superfamily. TrmB family.

It catalyses the reaction guanosine(46) in tRNA + S-adenosyl-L-methionine = N(7)-methylguanosine(46) in tRNA + S-adenosyl-L-homocysteine. Its pathway is tRNA modification; N(7)-methylguanine-tRNA biosynthesis. Functionally, catalyzes the formation of N(7)-methylguanine at position 46 (m7G46) in tRNA. This Corynebacterium diphtheriae (strain ATCC 700971 / NCTC 13129 / Biotype gravis) protein is tRNA (guanine-N(7)-)-methyltransferase.